Reading from the N-terminus, the 383-residue chain is MAKHLFTSESVSEGHPDKIADQISDAVLDAILAQDPKARVACETYVKTGMVLVGGEVTTSAWVDIEELTRKTVREIGYTHSDMGFDADSCAVLNAIGKQSPDINQGVDRADPKEQGAGDQGLMFGYASNETEILMPAPITYAHALVKRQSEVRKNGTLPWLRPDAKSQVTFAYENNKIVGIDAIVLSTQHSPDIAQADLIEGVMETIIKPVLPAQWLSKDTKYFINPTGRFVIGGPMGDCGLTGRKIIVDTYGGMARHGGGAFSGKDPSKVDRSAAYAARYVAKNIVAAGLADRCELQVSYAIGVAEPTSISIETFGTGKVSEEVLIKLVRQHFDLRPYGLTEMLNLARPIYQATAAYGHFGRNEFPWEATDKAEALRADAGL.

ATP is bound at residue His15. Asp17 lines the Mg(2+) pocket. Glu43 is a binding site for K(+). 2 residues coordinate L-methionine: Glu56 and Gln99. A flexible loop region spans residues 99–109 (QSPDINQGVDR). ATP-binding positions include 164-166 (DAK), 230-231 (RF), Asp239, 245-246 (RK), Ala262, and Lys266. Residue Asp239 participates in L-methionine binding. Lys270 serves as a coordination point for L-methionine.

Belongs to the AdoMet synthase family. As to quaternary structure, homotetramer; dimer of dimers. It depends on Mg(2+) as a cofactor. K(+) serves as cofactor.

The protein resides in the cytoplasm. The catalysed reaction is L-methionine + ATP + H2O = S-adenosyl-L-methionine + phosphate + diphosphate. Its pathway is amino-acid biosynthesis; S-adenosyl-L-methionine biosynthesis; S-adenosyl-L-methionine from L-methionine: step 1/1. Catalyzes the formation of S-adenosylmethionine (AdoMet) from methionine and ATP. The overall synthetic reaction is composed of two sequential steps, AdoMet formation and the subsequent tripolyphosphate hydrolysis which occurs prior to release of AdoMet from the enzyme. This chain is S-adenosylmethionine synthase, found in Shewanella putrefaciens (strain CN-32 / ATCC BAA-453).